Here is a 793-residue protein sequence, read N- to C-terminus: Peroxidase-like protein (793 aa).

The N-terminal stretch at 1-20 (MNLFICHVFLLLLHGYLIIC) is a signal peptide.

It belongs to the peroxidase family. As to expression, prismatic layer of shell (at protein level). Expressed primarily in the mantle with highest level in the mantle edge and lower level in the mantle pallium.

The protein resides in the secreted. In Margaritifera margaritifera (Freshwater pearl mussel), this protein is Peroxidase-like protein.